Consider the following 327-residue polypeptide: Malate dehydrogenase (327 aa).

Position 12–18 (G12–A18) interacts with NAD(+). Substrate contacts are provided by R93 and R99. Residues N106, Q113, and V130–N132 contribute to the NAD(+) site. Residues N132 and R163 each contribute to the substrate site. H188 functions as the Proton acceptor in the catalytic mechanism.

This sequence belongs to the LDH/MDH superfamily. MDH type 2 family.

It catalyses the reaction (S)-malate + NAD(+) = oxaloacetate + NADH + H(+). Catalyzes the reversible oxidation of malate to oxaloacetate. The sequence is that of Malate dehydrogenase from Paraburkholderia phytofirmans (strain DSM 17436 / LMG 22146 / PsJN) (Burkholderia phytofirmans).